The chain runs to 167 residues: Bacterial non-heme ferritin (167 aa).

Positions 1–145 (MLSKEVVKLL…GIVDKIKLIG (145 aa)) constitute a Ferritin-like diiron domain. Residues Glu17, Glu50, His53, Glu94, and Gln127 each contribute to the Fe cation site.

Belongs to the ferritin family. Prokaryotic subfamily. As to quaternary structure, homooligomer of 24 subunits that assemble into a spherical protein shell (12 +/- 1 nM diameter) that can sequester at least 2000 iron atoms.

It is found in the cytoplasm. It catalyses the reaction 4 Fe(2+) + O2 + 6 H2O = 4 iron(III) oxide-hydroxide + 12 H(+). Iron-storage protein. The protein is Bacterial non-heme ferritin (ftn) of Campylobacter jejuni subsp. jejuni serotype O:2 (strain ATCC 700819 / NCTC 11168).